We begin with the raw amino-acid sequence, 423 residues long: Oligopeptide transport ATP-binding protein OppD (423 aa).

In terms of domain architecture, ABC transporter spans 24–309 (IRDLHVSFKV…PVHPYTWALM (286 aa)). 58 to 65 (GESGSGKS) provides a ligand contact to ATP. The tract at residues 398 to 423 (AIKMPSQPVKQPKSNGNKKTKTKSAR) is disordered. The segment covering 413 to 423 (GNKKTKTKSAR) has biased composition (basic residues).

It belongs to the ABC transporter superfamily. In terms of assembly, the complex is composed of two ATP-binding proteins (OppD and OppF), two transmembrane proteins (OppB and OppC) and a solute-binding protein (OppA).

It is found in the cell membrane. It carries out the reaction a [peptide](out) + ATP + H2O = a [peptide](in) + ADP + phosphate + H(+). Its function is as follows. Part of the ABC transporter complex OppABCDF involved in the uptake of oligopeptides. Probably responsible for energy coupling to the transport system. This is Oligopeptide transport ATP-binding protein OppD (oppD) from Mycoplasma pneumoniae (strain ATCC 29342 / M129 / Subtype 1) (Mycoplasmoides pneumoniae).